A 517-amino-acid polypeptide reads, in one-letter code: MTTNIHDQRILILDFGSQYTQLVARRIREIGVYCELWSWDVEESDIRDFNPDGIILSGGPESVTEENSPRAPQYVFDSGVPVFGVCYGMQTMAEQLGGKVATSTEREFGYAAVQVTGESALFKDLEATQDVWMSHGDKVVEIPSDFVKIAETETCPYAVMANEEKKYYGVQFHPEVTHTKNGMKMLENFVLNVCGCEGLWTSASIIEDAVARIKEQVGDDEVILGLSGGVDSSVVAMLAHRAIGDKLTCVFVDNGLLRLNEADQVMEMFGNKFGLNIIHVNAEQRFLDALEGESDPEVKRKIIGHVFVDIFDEESKKLKNAKWLAQGTIYPDVIESAASKTGKAHVIKSHHNVGGLPDDMEMGLVEPLRELFKDEVRKIGLELGLPYNMLYRHPFPGPGLGVRVLGEIKKEYCDLLRRADAIFIEELHNADLYNKVSQAFTVFLPVRSVGVMGDGRKYDWVVSLRAVETIDFMTAHWAHLPYDFLGKVSNRIINEVNGISRVVYDISGKPPATIEWE.

The Glutamine amidotransferase type-1 domain maps to 9–199 (RILILDFGSQ…VLNVCGCEGL (191 aa)). The active-site Nucleophile is C86. Active-site residues include H173 and E175. The 193-residue stretch at 200 to 392 (WTSASIIEDA…LGLPYNMLYR (193 aa)) folds into the GMPS ATP-PPase domain. 227-233 (SGGVDSS) contacts ATP.

Homodimer.

It catalyses the reaction XMP + L-glutamine + ATP + H2O = GMP + L-glutamate + AMP + diphosphate + 2 H(+). It functions in the pathway purine metabolism; GMP biosynthesis; GMP from XMP (L-Gln route): step 1/1. Functionally, catalyzes the synthesis of GMP from XMP. The protein is GMP synthase [glutamine-hydrolyzing] of Aliivibrio fischeri (strain MJ11) (Vibrio fischeri).